Here is a 1475-residue protein sequence, read N- to C-terminus: Peroxidasin homolog (1475 aa).

Positions 1 to 23 (MAVRPTRRCLLALLLCFAWWAMA) are cleaved as a signal peptide. Positions 24–60 (VVASKQGAGCPSRCLCFRTTVRCMHLLLEAVPAVAPQ) constitute an LRRNT domain. 2 disulfides stabilise this stretch: Cys33/Cys39 and Cys37/Cys46. LRR repeat units lie at residues 58–81 (APQT…AFRR), 82–105 (LRSL…AFED), 107–129 (ENLK…AFKG), 130–153 (LASL…SFQH), 154–177 (LPKL…TFSQ), and 179–201 (ESMK…LWLA). One can recognise an LRRCT domain in the interval 189–241 (NALHCDCEILWLADLLKTYAQSGNAQAAATCEYPRRIQGRSVATITPEELNCE). Disulfide bonds link Cys193/Cys240, Cys195/Cys219, Cys264/Cys314, Cys360/Cys409, Cys451/Cys499, and Cys543/Cys591. 4 consecutive Ig-like C2-type domains span residues 243–329 (PRIT…QEVT), 339–425 (PTFV…AFII), 430–517 (PQFT…LTVQ), and 518–607 (PRVT…MVLS). N-linked (GlcNAc...) asparagine glycosylation occurs at Asn387. The LRR 7 repeat unit spans residues 402-425 (SDSGEYTCFASNSVDSIHATAFII). N-linked (GlcNAc...) asparagine glycans are attached at residues Asn637, Asn696, Asn716, and Asn728. Cystine bridges form between Cys720/Cys882, Cys729/Cys745, Cys844/Cys854, and Cys848/Cys872. A heme b-binding site is contributed by Asp823. Catalysis depends on His824, which acts as the Proton acceptor. Asp825 provides a ligand contact to Ca(2+). Ca(2+) is bound by residues Thr904, Tyr906, Asp908, and Ser910. A disulfide bridge connects residues Cys956 and Cys967. The N-linked (GlcNAc...) asparagine glycan is linked to Asn961. The heme b site is built by Glu977 and His1071. The LRR 8 repeat unit spans residues 1148-1172 (ALDLAAINIQRGRDHGIPPYHDYRV). Phosphotyrosine is present on Tyr1173. 2 cysteine pairs are disulfide-bonded: Cys1174–Cys1231 and Cys1272–Cys1298. Residue Asn1175 is glycosylated (N-linked (GlcNAc...) asparagine). Position 1177 is a phosphoserine (Ser1177). Residues 1267-1288 (LARILCDNSDNITRVQQDVFRV) form an LRR 9 repeat. N-linked (GlcNAc...) asparagine glycans are attached at residues Asn1277 and Asn1364. The interval 1312-1407 (CCEDCRTRGQ…QINSLESRLS (96 aa)) is required in homotrimerization. The 59-residue stretch at 1409-1467 (TECVDDSGESHGGNTKWKKDPCTVCECKNGQITCFVEACQPAACPQPVKVEGACCPVCL) folds into the VWFC domain.

Belongs to the peroxidase family. XPO subfamily. In terms of assembly, homotrimer; disulfide-linked. The homotrimer form is predominant. Homooligomer; disulfide-linked. Oligomerization occurs intracellularly before C-terminal proteolytic cleavage. Interacts with PXDNL; this interaction inhibits the peroxidase activity of PXDN. Ca(2+) serves as cofactor. It depends on heme b as a cofactor. Processed by FURIN and the proteolytic processing largely depends on the peroxidase activity of PXDN. The proteolytic cleavage occurs after intracellular homotrimerization and releases into the extracellular matrix a large, catalytically active fragment and a smaller fragment consisting primarily of the C-terminal VWFC domain. The processing enhances both peroxidase activity and sulfilimine cross-links formation. Highly expressed in the cardiovascular system. In the embryo, expressed in the corneal epithelial layer. In the adult eyes, expressed in the corneal and lens epithelium. Expressed in lung.

It is found in the secreted. It localises to the extracellular space. The protein resides in the extracellular matrix. The protein localises to the endoplasmic reticulum. Its subcellular location is the cell surface. It is found in the basement membrane. The catalysed reaction is L-lysyl-[collagen] + L-methionyl-[collagen] + H2O2 = [collagen]-L-lysyl-N-S-L-methionyl-[collagen] + 2 H2O + H(+). It catalyses the reaction bromide + H2O2 = hypobromite + H2O. The enzyme catalyses L-lysyl-[collagen] + L-methionyl-[collagen] + hypobromite = [collagen]-L-lysyl-N-S-L-methionyl-[collagen] + bromide + H2O + H(+). It carries out the reaction (5R)-5-hydroxy-L-lysyl-[collagen] + L-methionyl-[collagen] + hypobromite = [collagen]-(5R)-5-hydroxy-L-lysyl-N-S-L-methionyl-[collagen] + bromide + H2O + H(+). The catalysed reaction is (5R)-5-hydroxy-L-lysyl-[collagen] + L-methionyl-[collagen] + H2O2 = [collagen]-(5R)-5-hydroxy-L-lysyl-N-S-L-methionyl-[collagen] + 2 H2O + H(+). It catalyses the reaction L-tyrosyl-[protein] + bromide + H2O2 + H(+) = 3-bromo-L-tyrosyl-[protein] + 2 H2O. The enzyme catalyses hypobromite + L-tyrosyl-[protein] + H(+) = 3-bromo-L-tyrosyl-[protein] + H2O. With respect to regulation, thiocyanate inhibits the formation of 3-bromotyrosine. In terms of biological role, catalyzes the two-electron oxidation of bromide by hydrogen peroxide and generates hypobromite as a reactive intermediate which mediates the formation of sulfilimine cross-links between methionine and hydroxylysine residues within an uncross-linked collagen IV/COL4A1 NC1 hexamer. In turns, directly contributes to the collagen IV network-dependent fibronectin/FN and laminin assembly, which is required for full extracellular matrix (ECM)-mediated signaling. Thus, sulfilimine cross-links are essential for growth factor-induced cell proliferation and survival in endothelial cells, an event essential to basement membrane integrity. In addition, through the bromide oxidation, may promote tubulogenesis and induce angiogenesis through ERK1/2, Akt, and FAK pathways. Moreover brominates alpha2 collagen IV chain/COL4A2 at 'Tyr-1480' and leads to bromine enrichment of the basement membranes. In vitro, can also catalyze the two-electron oxidation of thiocyanate and iodide and these two substrates could effectively compete with bromide and thus inhibit the formation of sulfilimine bonds. Binds laminins. May play a role in the organization of eyeball structure and lens development during eye development. This chain is Peroxidasin homolog, found in Mus musculus (Mouse).